A 304-amino-acid chain; its full sequence is tRNA dimethylallyltransferase (304 aa).

10–17 (GPTASGKT) lines the ATP pocket. 12–17 (TASGKT) serves as a coordination point for substrate. Interaction with substrate tRNA regions lie at residues 35-38 (DSAL), 159-163 (QRLSR), and 240-245 (RCVGYR).

The protein belongs to the IPP transferase family. Monomer. Mg(2+) serves as cofactor.

It catalyses the reaction adenosine(37) in tRNA + dimethylallyl diphosphate = N(6)-dimethylallyladenosine(37) in tRNA + diphosphate. Its function is as follows. Catalyzes the transfer of a dimethylallyl group onto the adenine at position 37 in tRNAs that read codons beginning with uridine, leading to the formation of N6-(dimethylallyl)adenosine (i(6)A). In Shewanella putrefaciens (strain CN-32 / ATCC BAA-453), this protein is tRNA dimethylallyltransferase.